The primary structure comprises 301 residues: Protein phosphatase 1 regulatory subunit 3B (301 aa).

The PP1-binding motif signature appears at 79–82 (RVSF). One can recognise a CBM21 domain in the interval 142–250 (RNRLQAESVC…SNKGLNYRIV (109 aa)).

As to quaternary structure, interacts with glycogen, PPP1CC catalytic subunit of PP1 and PYGL. Associates with glycogen particles. Forms complexes with debranching enzyme, glycogen phosphorylase, glycogen synthase and phosphorylase kinase which is necessary for its regulation of PP1 activity.

Its function is as follows. Acts as a glycogen-targeting subunit for phosphatase PP1. Facilitates interaction of the PP1 with enzymes of the glycogen metabolism and regulates its activity. Suppresses the rate at which PP1 dephosphorylates (inactivates) glycogen phosphorylase and enhances the rate at which it activates glycogen synthase and therefore limits glycogen breakdown. The chain is Protein phosphatase 1 regulatory subunit 3B (ppp1r3b) from Xenopus tropicalis (Western clawed frog).